The sequence spans 150 residues: 3-dehydroquinate dehydratase (150 aa).

Tyr-22 functions as the Proton acceptor in the catalytic mechanism. The substrate site is built by Asn-73, His-79, and Asp-86. The active-site Proton donor is the His-99. Residues 100 to 101 (LS) and Arg-110 contribute to the substrate site.

It belongs to the type-II 3-dehydroquinase family. In terms of assembly, homododecamer.

The catalysed reaction is 3-dehydroquinate = 3-dehydroshikimate + H2O. It functions in the pathway metabolic intermediate biosynthesis; chorismate biosynthesis; chorismate from D-erythrose 4-phosphate and phosphoenolpyruvate: step 3/7. In terms of biological role, catalyzes a trans-dehydration via an enolate intermediate. This is 3-dehydroquinate dehydratase from Dinoroseobacter shibae (strain DSM 16493 / NCIMB 14021 / DFL 12).